We begin with the raw amino-acid sequence, 180 residues long: NADH-quinone oxidoreductase subunit I (180 aa).

2 4Fe-4S ferredoxin-type domains span residues 50–80 and 90–119; these read LTRD…LQKT and EFFR…LTPD. The [4Fe-4S] cluster site is built by C60, C63, C66, C70, C99, C102, C105, and C109.

This sequence belongs to the complex I 23 kDa subunit family. As to quaternary structure, NDH-1 is composed of 13 different subunits. Subunits NuoA, H, J, K, L, M, N constitute the membrane sector of the complex. [4Fe-4S] cluster serves as cofactor.

Its subcellular location is the cell inner membrane. It carries out the reaction a quinone + NADH + 5 H(+)(in) = a quinol + NAD(+) + 4 H(+)(out). In terms of biological role, NDH-1 shuttles electrons from NADH, via FMN and iron-sulfur (Fe-S) centers, to quinones in the respiratory chain. The immediate electron acceptor for the enzyme in this species is believed to be ubiquinone. Couples the redox reaction to proton translocation (for every two electrons transferred, four hydrogen ions are translocated across the cytoplasmic membrane), and thus conserves the redox energy in a proton gradient. The chain is NADH-quinone oxidoreductase subunit I from Shigella dysenteriae serotype 1 (strain Sd197).